We begin with the raw amino-acid sequence, 129 residues long: Serum amyloid A-1 protein (129 aa).

An N-terminal signal peptide occupies residues 1–18; that stretch reads MKLFTGLIFCSLVLGVSS. The segment at 19–44 is important for amyloid formation; sequence QWYSFIGEAAQGAWDMYRAYSDMIEA. Positions 92–129 are disordered; it reads GDSGHGVEDSKADQAANEWGRSGKDPNHFRPPGLPDKY.

It belongs to the SAA family. In terms of assembly, homohexamer; dimer of trimers. Can form amyloid fibrils after partial proteolysis; the native, undenatured protein does not form amyloid fibrils (in vitro). Apolipoprotein of the HDL complex. Binds to heparin. Detected in liver.

Its subcellular location is the secreted. In terms of biological role, major acute phase protein. The sequence is that of Serum amyloid A-1 protein (SAA1) from Neovison vison (American mink).